Here is a 135-residue protein sequence, read N- to C-terminus: Interleukin-4 (135 aa).

A signal peptide spans 1-24 (MGLTYQLIPVLVCLLVCTSHFVHG). Disulfide bonds link C27–C135, C48–C85, and C70–C105. N-linked (GlcNAc...) asparagine glycosylation is present at N62.

The protein belongs to the IL-4/IL-13 family.

It localises to the secreted. Its function is as follows. Participates in at least several B-cell activation processes as well as of other cell types. It is a costimulator of DNA-synthesis. It induces the expression of class II MHC molecules on resting B-cells. It enhances both secretion and cell surface expression of IgE and IgG1. It also regulates the expression of the low affinity Fc receptor for IgE (CD23) on both lymphocytes and monocytes. Positively regulates IL31RA expression in macrophages. Stimulates autophagy in dendritic cells by interfering with mTORC1 signaling and through the induction of RUFY4. This chain is Interleukin-4 (IL4), found in Bubalus carabanensis (Swamp type water buffalo).